We begin with the raw amino-acid sequence, 205 residues long: Nitrophorin-4 (205 aa).

An N-terminal signal peptide occupies residues 1–21; the sequence is MKSYTSLLAVAILCLFGGVNG. 2 disulfides stabilise this stretch: cysteine 23–cysteine 143 and cysteine 62–cysteine 192. Residue histidine 80 coordinates heme.

The protein belongs to the calycin superfamily. Nitrophorin family. Heme b is required as a cofactor. Salivary gland (at protein level).

The protein localises to the secreted. It catalyses the reaction 3 nitrite + 2 H(+) = 2 nitric oxide + nitrate + H2O. Functionally, heme-based protein that delivers nitric oxide gas (NO) to the victim while feeding, resulting in vasodilation and inhibition of platelet aggregation. Reversibly binds nitric oxide (NO). Also binds tightly to histamine, which is released by the host to induce wound healing. NO release is pH dependent and linked to loop dynamics. This chain is Nitrophorin-4, found in Rhodnius prolixus (Triatomid bug).